Consider the following 950-residue polypeptide: Calcium-transporting ATPase 1 (950 aa).

Ser2 is subject to N-acetylserine. Topologically, residues 2–92 (SDNPFNASLL…SLFKKFLSNF (91 aa)) are cytoplasmic. Residues 93 to 111 (IEDRMILLLIGSAVVSLFM) traverse the membrane as a helical segment. At 112–116 (GNIDD) the chain is on the lumenal side. A helical transmembrane segment spans residues 117 to 133 (AVSITLAIFIVVTVGFV). Topologically, residues 134–288 (QEYRSEKSLE…LQLTMDKLGK (155 aa)) are cytoplasmic. A Phosphoserine modification is found at Ser227. The helical transmembrane segment at 289-309 (DLSLVSFIVIGMICLVGIIQG) threads the bilayer. Residues 310-323 (RSWLEMFQISVSLA) are Lumenal-facing. Residues 324 to 344 (VAAIPEGLPIIVTVTLALGVL) form a helical membrane-spanning segment. The Cytoplasmic portion of the chain corresponds to 345 to 814 (RMAKRKAIVR…KILTHDVMKR (470 aa)). The active-site 4-aspartylphosphate intermediate is Asp371. Residues 815-835 (LLTTAACIIVGTVYIFVKEMA) form a helical membrane-spanning segment. Topologically, residues 836–844 (EDGKVTARD) are lumenal. The chain crosses the membrane as a helical span at residues 845-862 (TTMTFTCFVFFDMFNALA). At 863–884 (CRHNTKSIFEIGFFTNKMFNYA) the chain is on the cytoplasmic side. Residues 885 to 905 (VGLSLLGQMCAIYIPFFQSIF) traverse the membrane as a helical segment. The Lumenal segment spans residues 906–909 (KTEK). A helical transmembrane segment spans residues 910–930 (LGISDILLLLLISSSVFIVDE). Residues 931-950 (LRKLWTRKKNEEDSTYFSNV) are Cytoplasmic-facing.

The protein belongs to the cation transport ATPase (P-type) (TC 3.A.3) family.

The protein resides in the golgi apparatus membrane. The catalysed reaction is Ca(2+)(in) + ATP + H2O = Ca(2+)(out) + ADP + phosphate + H(+). This magnesium-dependent enzyme catalyzes the hydrolysis of ATP coupled with the transport of calcium. Has a role in the secretory pathway. The polypeptide is Calcium-transporting ATPase 1 (PMR1) (Saccharomyces cerevisiae (strain ATCC 204508 / S288c) (Baker's yeast)).